The following is a 422-amino-acid chain: Serine hydroxymethyltransferase (422 aa).

Residues Leu-120 and 124 to 126 each bind (6S)-5,6,7,8-tetrahydrofolate; that span reads GHL. Position 228 is an N6-(pyridoxal phosphate)lysine (Lys-228).

It belongs to the SHMT family. In terms of assembly, homodimer. Pyridoxal 5'-phosphate is required as a cofactor.

Its subcellular location is the cytoplasm. It catalyses the reaction (6R)-5,10-methylene-5,6,7,8-tetrahydrofolate + glycine + H2O = (6S)-5,6,7,8-tetrahydrofolate + L-serine. It functions in the pathway one-carbon metabolism; tetrahydrofolate interconversion. Its pathway is amino-acid biosynthesis; glycine biosynthesis; glycine from L-serine: step 1/1. Catalyzes the reversible interconversion of serine and glycine with tetrahydrofolate (THF) serving as the one-carbon carrier. This reaction serves as the major source of one-carbon groups required for the biosynthesis of purines, thymidylate, methionine, and other important biomolecules. Also exhibits THF-independent aldolase activity toward beta-hydroxyamino acids, producing glycine and aldehydes, via a retro-aldol mechanism. In Actinobacillus succinogenes (strain ATCC 55618 / DSM 22257 / CCUG 43843 / 130Z), this protein is Serine hydroxymethyltransferase.